Consider the following 104-residue polypeptide: Type IV secretion system protein PtlB homolog (104 aa).

A helical transmembrane segment spans residues 30–50 (IALLGIWFSIAFLALFPVALL).

The protein belongs to the virB3 family.

The protein resides in the cell membrane. In Bordetella parapertussis (strain 12822 / ATCC BAA-587 / NCTC 13253), this protein is Type IV secretion system protein PtlB homolog (ptlB).